The following is a 98-amino-acid chain: MFAPRVFLSMIGALAAFAVATYYLNGSLASTAIQTLICAVLIQVGYFIAVLFLVWKEARERRRLSSQKQFMTAEAANDEKQPGKVSLRRLNRPHHLNS.

Transmembrane regions (helical) follow at residues Val-6–Gly-26 and Thr-35–Trp-55. A disordered region spans residues Ala-73 to Ser-98. The span at Ser-86–Ser-98 shows a compositional bias: basic residues.

It is found in the cell membrane. It participates in glycan metabolism; exopolysaccharide biosynthesis. Inhibition of exopolysaccharide synthesis (EPS) and nodulation ability (NOD). In Rhizobium meliloti (strain 1021) (Ensifer meliloti), this protein is Exopolysaccharide production repressor protein (exoX).